Here is a 245-residue protein sequence, read N- to C-terminus: Transcriptional regulatory protein YpdB (245 aa).

One can recognise a Response regulatory domain in the interval 2 to 116 (KVIIVEDEFL…RITGMLQKLE (115 aa)). Aspartate 53 carries the 4-aspartylphosphate modification. Residues 140–245 (INLVKDERII…VKEFRQLMHL (106 aa)) form the HTH LytTR-type domain.

In terms of processing, phosphorylated by YpdA.

Its subcellular location is the cytoplasm. Its function is as follows. Member of the two-component regulatory system YpdA/YpdB. YpdB regulates expression of yhjX by binding to its promoter region. The chain is Transcriptional regulatory protein YpdB (ypdB) from Escherichia coli O6:H1 (strain CFT073 / ATCC 700928 / UPEC).